The sequence spans 182 residues: PRA1 family protein D (182 aa).

Residue Ala-2 is modified to N-acetylalanine. Helical transmembrane passes span 68-88, 107-127, and 129-149; these read LITR…WFFL, IVAV…GVWL, and ALTT…LRGT. Residues 163–182 are disordered; the sequence is PMLSTSGGGNDGARGDYSGI.

This sequence belongs to the PRA1 family. As to quaternary structure, interacts with PRA1F2 and PRA1F3. Interacts with the cauliflower mosaic virus (CaMV) movement protein (via N-terminus). In terms of tissue distribution, expressed in hypocotyls, roots, lateral roots, lateral root caps, columella cells, leaves, shoot apex, stems and flowers.

Its subcellular location is the endosome membrane. Its function is as follows. May be involved in both secretory and endocytic intracellular trafficking in the endosomal/prevacuolar compartments. This Arabidopsis thaliana (Mouse-ear cress) protein is PRA1 family protein D (PRA1D).